The following is a 79-amino-acid chain: M-myrmicitoxin(01)-Tb1a (79 aa).

The signal sequence occupies residues 1–26 (MKLSFLSLVLAIILVMALMYTPHAEA). A propeptide spanning residues 27-56 (KAWADADADATAAADADADAVADALADAVA) is cleaved from the precursor. Valine amide is present on valine 76.

This sequence belongs to the formicidae venom precursor-01 superfamily. The C-terminal amidation is important for antimicrobial activity, since a non-amidated synthetic peptide shows a reduced antimicrobial activity (2-20-fold depending on the strain tested). The amidation may play a positive role in the peptide conformation, since amidated peptide shows an increase of about 5% of helical content. Expressed by the venom gland.

The protein resides in the secreted. The protein localises to the target cell membrane. Functionally, antimicrobial peptide that shows antimicrobial activities against all microorganisms tested with minimal inhibitory concentrations (MICs) values ranging from 0.45 to 97.5 umol/L. This peptide kills the microorganisms by permeabilizating the membranes. It shows a very weak hemolytic activity (HC(50)=325 umol/L) and weak cytotoxicity against human lymphocytes (LC(50)=67.8 umol/L). Gram-negative bacteria tested are E.coli (MIC=24.4 umol/L), C.sakazakii (MIC=5.8 umol/L), P.aeruginosa (MIC=8.7-12.2 umol/L), S.enterica (MIC=5.4 umol/L), and H.pylori (MIC=0.99-3.9 umol/L). Gram-positive bacteria tested are E.hirae (MIC=12.2 umol/L), S.aureus (MIC=3.0-6.4 umol/L), methicillin-resistant S.aureus (MRSA) (MIC=8.7 umol/L), S.xylosus (MIC=0.45-1.3 umol/L), and B.subtilis (MIC=24.4 umol/L). Fungi tested are A.niger (MIC=0.75 umol/L), C.albicans (MIC=17.3 umol/L), G.candidum (MIC=97.5 umol/L), and S.cerevisiae (MIC=6.1 umol/L). Finally the parasite tested is L.infantum (MIC=1.5 umol/L). In Tetramorium bicarinatum (Tramp ant), this protein is M-myrmicitoxin(01)-Tb1a.